We begin with the raw amino-acid sequence, 343 residues long: Adenosine kinase (343 aa).

Residue Asp296 is part of the active site.

It belongs to the carbohydrate kinase PfkB family. It depends on Mg(2+) as a cofactor.

It carries out the reaction adenosine + ATP = AMP + ADP + H(+). Its pathway is purine metabolism; AMP biosynthesis via salvage pathway; AMP from adenosine: step 1/1. Functionally, ATP dependent phosphorylation of adenosine and other related nucleoside analogs to monophosphate derivatives. Can also act on the cytokinin isopentenyladenosine to produce isopentenyladenosine monophosphate. This chain is Adenosine kinase (ADK), found in Physcomitrium patens (Spreading-leaved earth moss).